The primary structure comprises 310 residues: Lymphotoxin-beta (310 aa).

Over 1 to 27 (MGALGLQGRGGRPQGTGCLLLAVAGAT) the chain is Cytoplasmic. The helical; Signal-anchor for type II membrane protein transmembrane segment at 28-48 (SLVTLLLAVPITVLAVLALVP) threads the bilayer. The Extracellular segment spans residues 49–310 (QEQGGLVMES…LGKCLHSANV (262 aa)). The segment at 67–86 (QGLSKSNGLPSRLHSQIPSS) is disordered. The THD domain maps to 138 to 293 (PAAHLIGAWM…GKTFFGAVMV (156 aa)). N-linked (GlcNAc...) asparagine glycosylation is present at Asn-272.

This sequence belongs to the tumor necrosis factor family. In terms of assembly, heterotrimer of either two LTB and one LTA subunits or (less prevalent) two LTA and one LTB subunits.

It is found in the membrane. Cytokine that binds to LTBR/TNFRSF3. May play a specific role in immune response regulation. Provides the membrane anchor for the attachment of the heterotrimeric complex to the cell surface. This is Lymphotoxin-beta (LTB) from Marmota monax (Woodchuck).